The chain runs to 147 residues: Cyanate hydratase (147 aa).

Catalysis depends on residues arginine 88, glutamate 91, and serine 114.

Belongs to the cyanase family.

It catalyses the reaction cyanate + hydrogencarbonate + 3 H(+) = NH4(+) + 2 CO2. Functionally, catalyzes the reaction of cyanate with bicarbonate to produce ammonia and carbon dioxide. In Variovorax paradoxus (strain S110), this protein is Cyanate hydratase.